A 146-amino-acid chain; its full sequence is Probable U6 snRNA-associated Sm-like protein LSm4 (146 aa).

The Sm domain maps to 2–75 (LPLSLLKTAQ…IKYLRVPDEV (74 aa)). The span at 80 to 91 (QEEAKSRTDRKP) shows a compositional bias: basic and acidic residues. The segment at 80–146 (QEEAKSRTDR…GGRGGGRGRG (67 aa)) is disordered. Gly residues predominate over residues 137-146 (GGRGGGRGRG).

Belongs to the snRNP Sm proteins family. LSm subunits form a heteromer with a doughnut shape.

Its subcellular location is the nucleus. In terms of biological role, binds specifically to the 3'-terminal U-tract of U6 snRNA. The polypeptide is Probable U6 snRNA-associated Sm-like protein LSm4 (Nicotiana tabacum (Common tobacco)).